The chain runs to 44 residues: Alpha-amylase inhibitor magnificamide (44 aa).

3 disulfides stabilise this stretch: cysteine 6–cysteine 38, cysteine 16–cysteine 33, and cysteine 20–cysteine 39. The inhibitory motif stretch occupies residues 7-10 (YIYH).

The protein belongs to the sea anemone alpha-amylase inhibitor family.

It localises to the secreted. In terms of biological role, mammalian alpha-amylase (AMY2A) inhibitor. The recombinant peptide inhibits porcine pancreatic (Ki=0.17 nM) and human saliva alpha-amylases (Ki=7.7 nM). It does not show antimicrobial (tested on fungi and bacteria) or channel modulating activities (tested on 18 voltage-gated sodium and potassium channles). The sequence is that of Alpha-amylase inhibitor magnificamide from Heteractis magnifica (Magnificent sea anemone).